A 513-amino-acid polypeptide reads, in one-letter code: Sphingosine-1-phosphate transporter SPNS2 (513 aa).

The next 11 membrane-spanning stretches (helical) occupy residues 102–122, 130–150, 163–183, 190–210, 222–242, 276–296, 320–340, 354–374, 378–398, 422–442, and 463–483; these read GLLQ…FGYL, VILS…SFIP, LVGI…GDLF, LMLS…YITG, WALR…LIFV, LATS…PLYL, LIFG…GAGA, LVCA…FVAA, IIAA…NWAI, TSHL…SDLI, and LCPF…LFFL.

Belongs to the major facilitator superfamily. Spinster (TC 2.A.1.49) family.

The protein resides in the cell membrane. It localises to the endosome membrane. It catalyses the reaction sphing-4-enine 1-phosphate(in) = sphing-4-enine 1-phosphate(out). It carries out the reaction sphinganine 1-phosphate(in) = sphinganine 1-phosphate(out). Lipid transporter that specifically mediates export of sphingosine-1-phosphate (sphing-4-enine 1-phosphate, S1P) and sphinganine-1-phosphate. This chain is Sphingosine-1-phosphate transporter SPNS2 (spns2), found in Xenopus tropicalis (Western clawed frog).